The chain runs to 271 residues: Zinc finger protein 501 (271 aa).

C2H2-type zinc fingers lie at residues Ser-22–His-44, Tyr-50–His-72, Tyr-78–His-100, Tyr-106–His-128, Tyr-134–His-156, Phe-162–His-184, Tyr-190–His-212, Tyr-218–His-240, and Tyr-246–His-268.

Belongs to the krueppel C2H2-type zinc-finger protein family.

The protein localises to the nucleus. It is found in the nucleolus. Its function is as follows. May be involved in transcriptional regulation. Essential for Golgi structural integrity. This is Zinc finger protein 501 (ZNF501) from Homo sapiens (Human).